The sequence spans 170 residues: Cathelicidin antimicrobial peptide (170 aa).

The signal sequence occupies residues 1–30 (MKTQRDSPSLGRWSLVLLLLGLVMPLAIVA). A propeptide spans 31 to 131 (QVLSYQEAVL…DISCDKDNRR (101 aa)) (cathelin-like domain (CLD)). Disulfide bonds link Cys86–Cys97 and Cys108–Cys125. Residues 150–162 (LKKVGQKIKDFLG) form an active core region.

This sequence belongs to the cathelicidin family. Monomer, homodimer or homotrimer (in vitro). Oligomerizes as tetra- or hexamer in solution (in vitro). Post-translationally, proteolytically cleaved by proteinase PRTN3 into antibacterial peptide LL-37. Proteolytically cleaved by cathepsin CTSG and neutrophil elastase ELANE. Resistant to proteolytic degradation in solution, and when bound to both zwitterionic (mimicking mammalian membranes) and negatively charged membranes (mimicking bacterial membranes). In terms of processing, after secretion onto the skin surface, the CAMP gene product is processed by a serine protease-dependent mechanism into multiple novel antimicrobial peptides distinct from and shorter than cathelicidin LL-37. These peptides show enhanced antimicrobial action, acquiring the ability to kill skin pathogens such as S.aureus, E.coli and C.albicans. These peptides have lost the ability to stimulate CXCL8/IL8 release from keratinocytes. The peptides act synergistically, killing bacteria at lower concentrations when present together, and maintain activity at increased salt condition.

It localises to the secreted. It is found in the vesicle. Functionally, antimicrobial protein that is an integral component of the innate immune system. Binds to bacterial lipopolysaccharides (LPS). Acts via neutrophil N-formyl peptide receptors to enhance the release of CXCL2. Postsecretory processing generates multiple cathelicidin antimicrobial peptides with various lengths which act as a topical antimicrobial defense in sweat on skin. The unprocessed precursor form, cathelicidin antimicrobial peptide, inhibits the growth of Gram-negative E.coli and E.aerogenes with efficiencies comparable to that of the mature peptide LL-37 (in vitro). Its function is as follows. Antimicrobial peptide that is an integral component of the innate immune system. Binds to bacterial lipopolysaccharides (LPS). Causes membrane permeabilization by forming transmembrane pores (in vitro). Causes lysis of E.coli. Exhibits antimicrobial activity against Gram-negative bacteria such as P.aeruginosa, S.typhimurium, E.aerogenes, E.coli and P.syringae, Gram-positive bacteria such as L.monocytogenes, S.epidermidis, S.pyogenes and S.aureus, as well as vancomycin-resistant enterococci (in vitro). Exhibits antimicrobial activity against methicillin-resistant S.aureus, P.mirabilis, and C.albicans in low-salt media, but not in media containing 100 mM NaCl (in vitro). Forms chiral supramolecular assemblies with quinolone signal (PQS) molecules of P.aeruginosa, which may lead to interference of bacterial quorum signaling and perturbance of bacterial biofilm formation. May form supramolecular fiber-like assemblies on bacterial membranes. Induces cytokine and chemokine producation as well as TNF/TNFA and CSF2/GMCSF production in normal human keratinocytes. Exhibits hemolytic activity against red blood cells. In terms of biological role, exhibits antimicrobial activity against E.coli and B.megaterium (in vitro). The protein is Cathelicidin antimicrobial peptide of Papio papio (Guinea baboon).